The chain runs to 740 residues: Phosphoribosylformylglycinamidine synthase subunit PurL (740 aa).

Residue His49 is part of the active site. 2 residues coordinate ATP: Tyr52 and Lys91. Glu93 lines the Mg(2+) pocket. Residues Ser94–His97 and Arg116 each bind substrate. His95 acts as the Proton acceptor in catalysis. Asp117 contacts Mg(2+). Gln245 contacts substrate. Asp273 lines the Mg(2+) pocket. Glu317–Gln319 lines the substrate pocket. Residues Asp501 and Gly538 each contribute to the ATP site. Asn539 contacts Mg(2+). Substrate is bound at residue Ser541.

This sequence belongs to the FGAMS family. In terms of assembly, monomer. Part of the FGAM synthase complex composed of 1 PurL, 1 PurQ and 2 PurS subunits.

The protein localises to the cytoplasm. It catalyses the reaction N(2)-formyl-N(1)-(5-phospho-beta-D-ribosyl)glycinamide + L-glutamine + ATP + H2O = 2-formamido-N(1)-(5-O-phospho-beta-D-ribosyl)acetamidine + L-glutamate + ADP + phosphate + H(+). Its pathway is purine metabolism; IMP biosynthesis via de novo pathway; 5-amino-1-(5-phospho-D-ribosyl)imidazole from N(2)-formyl-N(1)-(5-phospho-D-ribosyl)glycinamide: step 1/2. Functionally, part of the phosphoribosylformylglycinamidine synthase complex involved in the purines biosynthetic pathway. Catalyzes the ATP-dependent conversion of formylglycinamide ribonucleotide (FGAR) and glutamine to yield formylglycinamidine ribonucleotide (FGAM) and glutamate. The FGAM synthase complex is composed of three subunits. PurQ produces an ammonia molecule by converting glutamine to glutamate. PurL transfers the ammonia molecule to FGAR to form FGAM in an ATP-dependent manner. PurS interacts with PurQ and PurL and is thought to assist in the transfer of the ammonia molecule from PurQ to PurL. This is Phosphoribosylformylglycinamidine synthase subunit PurL from Sulfurovum sp. (strain NBC37-1).